Reading from the N-terminus, the 337-residue chain is Heme A synthase (337 aa).

A run of 5 helical transmembrane segments spans residues 6-26, 93-113, 118-138, 154-174, and 192-212; these read ITKW…IGGI, GRIT…KDVI, ILPY…GWYM, LAFH…QLIK, and LIFS…GAMV. H256 is a heme binding site. A run of 3 helical transmembrane segments spans residues 258-278, 285-305, and 308-328; these read LGGY…LKIE, IAYF…ITLL, and VPII…SIII. H316 serves as a coordination point for heme.

It belongs to the COX15/CtaA family. Type 2 subfamily. In terms of assembly, interacts with CtaB. Heme b serves as cofactor.

Its subcellular location is the cell membrane. It carries out the reaction Fe(II)-heme o + 2 A + H2O = Fe(II)-heme a + 2 AH2. Its pathway is porphyrin-containing compound metabolism; heme A biosynthesis; heme A from heme O: step 1/1. Catalyzes the conversion of heme O to heme A by two successive hydroxylations of the methyl group at C8. The first hydroxylation forms heme I, the second hydroxylation results in an unstable dihydroxymethyl group, which spontaneously dehydrates, resulting in the formyl group of heme A. This is Heme A synthase from Rickettsia felis (strain ATCC VR-1525 / URRWXCal2) (Rickettsia azadi).